The following is a 282-amino-acid chain: tRNA pseudouridine synthase B (282 aa).

Residue D39 is the Nucleophile of the active site.

Belongs to the pseudouridine synthase TruB family. Type 1 subfamily.

The enzyme catalyses uridine(55) in tRNA = pseudouridine(55) in tRNA. Functionally, responsible for synthesis of pseudouridine from uracil-55 in the psi GC loop of transfer RNAs. The chain is tRNA pseudouridine synthase B from Borreliella burgdorferi (strain ATCC 35210 / DSM 4680 / CIP 102532 / B31) (Borrelia burgdorferi).